Here is an 84-residue protein sequence, read N- to C-terminus: MKLLEFLKRERKKSASVAKERLQIIVAHQRGQRDQPDYMPMLEKELLEVIRRYVQVDQDAINISLDRDNDCSVLELNVTLPRDE.

This sequence belongs to the MinE family.

Functionally, prevents the cell division inhibition by proteins MinC and MinD at internal division sites while permitting inhibition at polar sites. This ensures cell division at the proper site by restricting the formation of a division septum at the midpoint of the long axis of the cell. In Chromohalobacter salexigens (strain ATCC BAA-138 / DSM 3043 / CIP 106854 / NCIMB 13768 / 1H11), this protein is Cell division topological specificity factor.